Here is a 771-residue protein sequence, read N- to C-terminus: Rho guanine nucleotide exchange factor 6 (771 aa).

Residues 1 to 111 (MNPEERLVTW…TLLAVNKATE (111 aa)) enclose the Calponin-homology (CH) domain. A disordered region spans residues 115-157 (SERPCGRSSSLSAATSSQTNPQVAVPSTAPEQHSEEKAEMTEN). The segment covering 122-131 (SSSLSAATSS) has biased composition (low complexity). Phosphoserine is present on Ser126. Thr133 bears the Phosphothreonine mark. In terms of domain architecture, SH3 spans 159–218 (SHQLIVKARFNFKQTNEDELSVCKGDIIYVTRVEEGGWWEGTLNGRTGWFPSNYVREIKP). Phosphoserine is present on Ser224. The 181-residue stretch at 240 to 420 (YYTVVLQNIL…KTLMGQCQDL (181 aa)) folds into the DH domain. A PH domain is found at 442–547 (DIKTLGNVIF…WMEQLNRLTK (106 aa)). A Phosphoserine modification is found at Ser487. Over residues 556–572 (SKTSSSSCSTHSSFSST) the composition is skewed to low complexity. Positions 556–580 (SKTSSSSCSTHSSFSSTGQPRGPLE) are disordered. Ser639 and Ser679 each carry phosphoserine.

As to quaternary structure, interacts with PAK kinases through the SH3 domain. Interacts with GIT1. Component of cytoplasmic complexes, which also contain PXN, GIT1 and PAK1. Interacts with BIN2. Identified in a complex with BIN2 and GIT2. Interacts with PARVB. Interacts with PARVG; the guanine nucleotide exchange factor activity of ARHGEF6 is essential for PARVG-induced enhancement of cell spreading. As to expression, detected in adult heart, spleen, lung, skeletal muscle, kidney and testis. Detected throughout embryogenesis.

Its subcellular location is the cell projection. It is found in the lamellipodium. In terms of biological role, acts as a RAC1 guanine nucleotide exchange factor (GEF). The sequence is that of Rho guanine nucleotide exchange factor 6 (Arhgef6) from Mus musculus (Mouse).